Reading from the N-terminus, the 585-residue chain is Methicillin resistance mecR1 protein (585 aa).

The interval 351–585 is beta-lactamase-like; the sequence is LNQLAPYFKG…ERILKEMELI (235 aa).

Belongs to the peptidase M56 family.

Functionally, penicillin-interactive protein and potential antirepressor. The protein is Methicillin resistance mecR1 protein (mecR1) of Staphylococcus aureus (strain Mu50 / ATCC 700699).